A 134-amino-acid chain; its full sequence is Profilin-4 (134 aa).

Cys13 and Cys118 are oxidised to a cystine. An Involved in PIP2 interaction motif is present at residues 84–100; the sequence is AVIRGKKGSGGITIKKT. At Thr114 the chain carries Phosphothreonine.

Belongs to the profilin family. In terms of assembly, occurs in many kinds of cells as a complex with monomeric actin in a 1:1 ratio. Post-translationally, phosphorylated by MAP kinases.

It localises to the cytoplasm. It is found in the cytoskeleton. Its function is as follows. Binds to actin and affects the structure of the cytoskeleton. At high concentrations, profilin prevents the polymerization of actin, whereas it enhances it at low concentrations. The chain is Profilin-4 from Olea europaea (Common olive).